The following is a 460-amino-acid chain: Ammonium transporter Rh type B-A (460 aa).

Topologically, residues 1-10 (MTGYSTNMRI) are cytoplasmic. Residues 11–31 (KLPLFCLILQFITIILFAVFV) form a helical membrane-spanning segment. At 32-62 (RYDHESDARGWHDELKNHSTANADNDFYFRY) the chain is on the extracellular side. A glycan (N-linked (GlcNAc...) asparagine) is linked at asparagine 48. The chain crosses the membrane as a helical span at residues 63–83 (PSFQDVHVMIFIGFGFLMTFL). Topologically, residues 84-87 (KRYG) are cytoplasmic. The chain crosses the membrane as a helical span at residues 88–108 (FSSVAFNFLIAAFGLQWSTLI). The Extracellular portion of the chain corresponds to 109–125 (QGFFHGFHDGKIHVGIE). A helical membrane pass occupies residues 126-146 (SMINADFCTGAVLISFGAVLG). Over 147–150 (KTSP) the chain is Cytoplasmic. A helical membrane pass occupies residues 151–171 (VQLIVMTLIEVTLFGINEYII). The Extracellular portion of the chain corresponds to 172–179 (LNIVGAKD). A helical membrane pass occupies residues 180-202 (AGGSMTIHTFGAYFGLIVSRVLY). The Cytoplasmic portion of the chain corresponds to 203 to 220 (RADLDKSRQREGSVYHSD). Residues 221-241 (LFAMIGTIYLWMFWPSFNSAV) form a helical membrane-spanning segment. The Extracellular portion of the chain corresponds to 242 to 252 (TAHGDDQHRTV). Residues 253 to 273 (LNTYYSLAACTLATFGFSALL) form a helical membrane-spanning segment. Residues 274-283 (NGEGKLDMVH) are Cytoplasmic-facing. A helical membrane pass occupies residues 284 to 304 (IQNAALAGGVAVGTSGEMMLT). A topological domain (extracellular) is located at residue proline 305. The helical transmembrane segment at 306–326 (FGAMIAGTLAGIVSVLGYKYL) threads the bilayer. Residues 327 to 347 (TPVLDSKLKIQDTCGVHNLHG) are Cytoplasmic-facing. The chain crosses the membrane as a helical span at residues 348-368 (MPGILGAVIGAIVALFATADI). Topologically, residues 369-394 (YGDGMDDVFPMIFDGSRTAKQQSLYQ) are extracellular. Residues 395 to 415 (FLALLVALGFAIVGGTVVGFI) form a helical membrane-spanning segment. The Cytoplasmic portion of the chain corresponds to 416–460 (LKLPLFGTPSDAECFEDAVYWEVPGGEGHQQLTVVVNNEDPDTQA).

This sequence belongs to the ammonium transporter (TC 2.A.49) family. Rh subfamily.

The protein localises to the basolateral cell membrane. Its subcellular location is the cytoplasmic vesicle membrane. Its function is as follows. Functions as a specific ammonium transporter. This Xenopus laevis (African clawed frog) protein is Ammonium transporter Rh type B-A (rhbg-a).